A 208-amino-acid chain; its full sequence is Peptidyl-prolyl cis-trans isomerase FKBP13, chloroplastic (208 aa).

Disulfide bonds link Cys84-Cys96 and Cys185-Cys190. The PPIase FKBP-type domain occupies 109–208; the sequence is GQLIKAHYVG…LFDIEYIGKA (100 aa).

The protein belongs to the FKBP-type PPIase family. Interacts in vitro with LTO1. The precursor, but not the mature form of the protein, interacts with the Rieske protein. As to expression, expressed in stems, leaves and developing flower buds, but not in roots.

It is found in the plastid. It localises to the chloroplast thylakoid lumen. The enzyme catalyses [protein]-peptidylproline (omega=180) = [protein]-peptidylproline (omega=0). With respect to regulation, PPIase activity is optimal in oxidized form (S-S) and minimal in reduced form (SH). Reduction of the oxidized form is mediated by thioredoxin (TRX-M). Its function is as follows. PPIases accelerate the folding of proteins. It catalyzes the cis-trans isomerization of proline imidic peptide bonds in oligopeptides. Responsive of the major PPIase activity in the chloroplast thylakoid lumen. Regulates the accumulation of Rieske protein, an essential component of the photosynthetic electron transport chain. This is Peptidyl-prolyl cis-trans isomerase FKBP13, chloroplastic from Arabidopsis thaliana (Mouse-ear cress).